A 297-amino-acid chain; its full sequence is Formamidopyrimidine-DNA glycosylase (297 aa).

The active-site Schiff-base intermediate with DNA is the proline 2. The active-site Proton donor is the glutamate 3. Catalysis depends on lysine 58, which acts as the Proton donor; for beta-elimination activity. Histidine 104, arginine 127, and lysine 170 together coordinate DNA. The segment at 261–297 adopts an FPG-type zinc-finger fold; that stretch reads SVYDREGKPCRKEGCSGTIQRFVQGGRSTFYCPICQR. The active-site Proton donor; for delta-elimination activity is arginine 287.

It belongs to the FPG family. Monomer. Zn(2+) serves as cofactor.

It carries out the reaction Hydrolysis of DNA containing ring-opened 7-methylguanine residues, releasing 2,6-diamino-4-hydroxy-5-(N-methyl)formamidopyrimidine.. It catalyses the reaction 2'-deoxyribonucleotide-(2'-deoxyribose 5'-phosphate)-2'-deoxyribonucleotide-DNA = a 3'-end 2'-deoxyribonucleotide-(2,3-dehydro-2,3-deoxyribose 5'-phosphate)-DNA + a 5'-end 5'-phospho-2'-deoxyribonucleoside-DNA + H(+). Functionally, involved in base excision repair of DNA damaged by oxidation or by mutagenic agents. Acts as a DNA glycosylase that recognizes and removes damaged bases. Has a preference for oxidized purines, such as 7,8-dihydro-8-oxoguanine (8-oxoG). Has AP (apurinic/apyrimidinic) lyase activity and introduces nicks in the DNA strand. Cleaves the DNA backbone by beta-delta elimination to generate a single-strand break at the site of the removed base with both 3'- and 5'-phosphates. The sequence is that of Formamidopyrimidine-DNA glycosylase from Chelativorans sp. (strain BNC1).